A 203-amino-acid chain; its full sequence is Urease accessory protein UreG (203 aa).

13–20 (GPVGSGKT) is a binding site for GTP.

This sequence belongs to the SIMIBI class G3E GTPase family. UreG subfamily. In terms of assembly, homodimer. UreD, UreF and UreG form a complex that acts as a GTP-hydrolysis-dependent molecular chaperone, activating the urease apoprotein by helping to assemble the nickel containing metallocenter of UreC. The UreE protein probably delivers the nickel.

The protein localises to the cytoplasm. Facilitates the functional incorporation of the urease nickel metallocenter. This process requires GTP hydrolysis, probably effectuated by UreG. This chain is Urease accessory protein UreG, found in Psychromonas ingrahamii (strain DSM 17664 / CCUG 51855 / 37).